The following is a 185-amino-acid chain: Ribosome-recycling factor (185 aa).

This sequence belongs to the RRF family.

The protein resides in the cytoplasm. Responsible for the release of ribosomes from messenger RNA at the termination of protein biosynthesis. May increase the efficiency of translation by recycling ribosomes from one round of translation to another. The sequence is that of Ribosome-recycling factor from Chromobacterium violaceum (strain ATCC 12472 / DSM 30191 / JCM 1249 / CCUG 213 / NBRC 12614 / NCIMB 9131 / NCTC 9757 / MK).